A 93-amino-acid chain; its full sequence is DNA/RNA-binding protein Alba (93 aa).

N6-acetyllysine is present on Lys-11.

It belongs to the histone-like Alba family. Acetylated. Acetylation at Lys-11 decreases DNA-binding affinity.

The protein resides in the cytoplasm. Its subcellular location is the chromosome. Functionally, binds double-stranded DNA tightly but without sequence specificity. Involved in DNA compaction. The protein is DNA/RNA-binding protein Alba of Pyrococcus furiosus (strain ATCC 43587 / DSM 3638 / JCM 8422 / Vc1).